Here is a 337-residue protein sequence, read N- to C-terminus: 2-oxoglutarate-dependent dioxygenase 19 (337 aa).

Residues 1-25 (MVAPSRLPSHEEQSAAAAADGSATP) are disordered. The Fe2OG dioxygenase domain occupies 179–283 (NLESCFQILV…RMSFVSLIGP (105 aa)). Fe cation-binding residues include His-208, Asp-210, and His-264. Arg-274 provides a ligand contact to 2-oxoglutarate.

Belongs to the iron/ascorbate-dependent oxidoreductase family. Requires Fe(2+) as cofactor. L-ascorbate is required as a cofactor. In terms of tissue distribution, expressed in shoots.

The protein localises to the cytoplasm. The catalysed reaction is melatonin + 2-oxoglutarate + O2 = 2-hydroxymelatonin + succinate + CO2. Functionally, involved in melatonin degradation. Catalyzes the hydroxylation of melatonin to produce 2-hydroxymelatonin. The protein is 2-oxoglutarate-dependent dioxygenase 19 of Oryza sativa subsp. japonica (Rice).